We begin with the raw amino-acid sequence, 824 residues long: Leucine--tRNA ligase (824 aa).

A 'HIGH' region motif is present at residues 41–51; that stretch reads PYPSGTLHVGH. The 'KMSKS' region motif lies at 580–584; sequence KMSKS. Lys583 is an ATP binding site.

It belongs to the class-I aminoacyl-tRNA synthetase family.

Its subcellular location is the cytoplasm. It catalyses the reaction tRNA(Leu) + L-leucine + ATP = L-leucyl-tRNA(Leu) + AMP + diphosphate. The polypeptide is Leucine--tRNA ligase (Thermotoga petrophila (strain ATCC BAA-488 / DSM 13995 / JCM 10881 / RKU-1)).